Reading from the N-terminus, the 417-residue chain is Methylthioribose-1-phosphate isomerase (417 aa).

Catalysis depends on Asp-285, which acts as the Proton donor.

The protein belongs to the eIF-2B alpha/beta/delta subunits family. MtnA subfamily.

It is found in the cytoplasm. It localises to the nucleus. The enzyme catalyses 5-(methylsulfanyl)-alpha-D-ribose 1-phosphate = 5-(methylsulfanyl)-D-ribulose 1-phosphate. It participates in amino-acid biosynthesis; L-methionine biosynthesis via salvage pathway; L-methionine from S-methyl-5-thio-alpha-D-ribose 1-phosphate: step 1/6. In terms of biological role, catalyzes the interconversion of methylthioribose-1-phosphate (MTR-1-P) into methylthioribulose-1-phosphate (MTRu-1-P). This is Methylthioribose-1-phosphate isomerase from Lachancea thermotolerans (strain ATCC 56472 / CBS 6340 / NRRL Y-8284) (Yeast).